A 344-amino-acid chain; its full sequence is Methionine import ATP-binding protein MetN (344 aa).

The ABC transporter domain maps to 2 to 241 (IELQGLSQRF…PQHEVTRAMI (240 aa)). 38-45 (GRSGAGKS) is a binding site for ATP.

This sequence belongs to the ABC transporter superfamily. Methionine importer (TC 3.A.1.24) family. In terms of assembly, the complex is composed of two ATP-binding proteins (MetN), two transmembrane proteins (MetI) and a solute-binding protein (MetQ).

The protein resides in the cell inner membrane. The enzyme catalyses L-methionine(out) + ATP + H2O = L-methionine(in) + ADP + phosphate + H(+). It carries out the reaction D-methionine(out) + ATP + H2O = D-methionine(in) + ADP + phosphate + H(+). Part of the ABC transporter complex MetNIQ involved in methionine import. Responsible for energy coupling to the transport system. The sequence is that of Methionine import ATP-binding protein MetN from Cupriavidus metallidurans (strain ATCC 43123 / DSM 2839 / NBRC 102507 / CH34) (Ralstonia metallidurans).